The primary structure comprises 185 residues: HTH-type transcriptional regulator Hpr (185 aa).

In terms of domain architecture, HTH marR-type spans 13–157 (AMIFSQRIAQ…LIAILRNIYG (145 aa)). A DNA-binding region (H-T-H motif) is located at residues 63-86 (ISEIAKFGVMHVSTAFNFSKKLEE).

Homodimer.

Negative regulator of protease production and sporulation. This chain is HTH-type transcriptional regulator Hpr, found in Bacillus anthracis (strain CDC 684 / NRRL 3495).